We begin with the raw amino-acid sequence, 545 residues long: Chaperonin GroEL (545 aa).

ATP is bound by residues 30–33 (TLGP), K51, 87–91 (DGTTT), G415, and D495.

This sequence belongs to the chaperonin (HSP60) family. Forms a cylinder of 14 subunits composed of two heptameric rings stacked back-to-back. Interacts with the co-chaperonin GroES.

It localises to the cytoplasm. The enzyme catalyses ATP + H2O + a folded polypeptide = ADP + phosphate + an unfolded polypeptide.. Functionally, together with its co-chaperonin GroES, plays an essential role in assisting protein folding. The GroEL-GroES system forms a nano-cage that allows encapsulation of the non-native substrate proteins and provides a physical environment optimized to promote and accelerate protein folding. The sequence is that of Chaperonin GroEL from Shewanella sp. (strain MR-7).